A 145-amino-acid chain; its full sequence is Bacilliredoxin GK1781 (145 aa).

The protein belongs to the bacilliredoxin family.

The polypeptide is Bacilliredoxin GK1781 (Geobacillus kaustophilus (strain HTA426)).